We begin with the raw amino-acid sequence, 273 residues long: Hydroxyethylthiazole kinase (273 aa).

Substrate is bound at residue methionine 47. Arginine 123 and threonine 169 together coordinate ATP. Position 196 (glycine 196) interacts with substrate.

It belongs to the Thz kinase family. Requires Mg(2+) as cofactor.

The enzyme catalyses 5-(2-hydroxyethyl)-4-methylthiazole + ATP = 4-methyl-5-(2-phosphooxyethyl)-thiazole + ADP + H(+). It participates in cofactor biosynthesis; thiamine diphosphate biosynthesis; 4-methyl-5-(2-phosphoethyl)-thiazole from 5-(2-hydroxyethyl)-4-methylthiazole: step 1/1. In terms of biological role, catalyzes the phosphorylation of the hydroxyl group of 4-methyl-5-beta-hydroxyethylthiazole (THZ). The sequence is that of Hydroxyethylthiazole kinase from Desulfotalea psychrophila (strain LSv54 / DSM 12343).